The following is a 376-amino-acid chain: Erythronate-4-phosphate dehydrogenase (376 aa).

Ser45 and Thr67 together coordinate substrate. Asp147 is a binding site for NAD(+). Residue Arg209 is part of the active site. Asp233 serves as a coordination point for NAD(+). Glu238 is an active-site residue. His255 functions as the Proton donor in the catalytic mechanism. Gly258 provides a ligand contact to NAD(+). Residue Tyr259 coordinates substrate.

The protein belongs to the D-isomer specific 2-hydroxyacid dehydrogenase family. PdxB subfamily. Homodimer.

The protein localises to the cytoplasm. The enzyme catalyses 4-phospho-D-erythronate + NAD(+) = (R)-3-hydroxy-2-oxo-4-phosphooxybutanoate + NADH + H(+). It participates in cofactor biosynthesis; pyridoxine 5'-phosphate biosynthesis; pyridoxine 5'-phosphate from D-erythrose 4-phosphate: step 2/5. Catalyzes the oxidation of erythronate-4-phosphate to 3-hydroxy-2-oxo-4-phosphonooxybutanoate. The protein is Erythronate-4-phosphate dehydrogenase of Shewanella loihica (strain ATCC BAA-1088 / PV-4).